Consider the following 253-residue polypeptide: Ribosomal RNA small subunit methyltransferase J (253 aa).

Residues 123-124 (ER) and D176 contribute to the S-adenosyl-L-methionine site.

The protein belongs to the methyltransferase superfamily. RsmJ family.

It localises to the cytoplasm. It catalyses the reaction guanosine(1516) in 16S rRNA + S-adenosyl-L-methionine = N(2)-methylguanosine(1516) in 16S rRNA + S-adenosyl-L-homocysteine + H(+). Its function is as follows. Specifically methylates the guanosine in position 1516 of 16S rRNA. This Magnetococcus marinus (strain ATCC BAA-1437 / JCM 17883 / MC-1) protein is Ribosomal RNA small subunit methyltransferase J.